Reading from the N-terminus, the 245-residue chain is MIYDIIGDIHGCFHEFMLLTKKLGYVWENDVPIHPNGRKLAFVGDLADRGPQSLQVIDTVISLVQQNKAVYVPGNHCDKLYRFFLGRNVQVTHGLETTVAEWEQADEKTKTRIRTQFMKLYENAPLYAILDDGKLVIAHAGIRGDYIGKSNQKVKKFVLYGDITGEKHPDGSPVRRDWAKHYRGDALIVYGHTPVKEPRWLNNTVNIDTGCVFGGQLTALRYPEMETVSVPSTMPYVAEKFRPFD.

Belongs to the PrpE family. It depends on Ni(2+) as a cofactor.

It carries out the reaction P(1),P(4)-bis(5'-guanosyl) tetraphosphate + H2O = GMP + GTP + 2 H(+). Its function is as follows. Asymmetrically hydrolyzes Ap4p to yield AMP and ATP. This is Bis(5'-nucleosyl)-tetraphosphatase PrpE [asymmetrical] from Anoxybacillus flavithermus (strain DSM 21510 / WK1).